The following is a 444-amino-acid chain: Viral protein kinase (444 aa).

The interval 1–25 is disordered; it reads MRWKRMERRPPLTPLRRSRTQSSGG. ATP is bound by residues 90–98 and Lys-108; that span reads LGRGAFGII. The active-site Proton acceptor is Asp-201.

Interacts with protein K-bZIP/K8. Interacts with host beta-catenin/CTNNB1. Post-translationally, AUtophosphorylated.

Its subcellular location is the host nucleus. It catalyses the reaction L-seryl-[protein] + ATP = O-phospho-L-seryl-[protein] + ADP + H(+). It carries out the reaction L-threonyl-[protein] + ATP = O-phospho-L-threonyl-[protein] + ADP + H(+). Functionally, serine/threonine protein kinase that plays a role in viral gene expression, viral DNA replication and encapsidation, and nuclear egress of virions. Regulates host transcriptional activity through interactions with RNA helicase and c-Jun N-terminal kinase (JNK) and viral transcriptional activity through interactions with the viral protein K-bZIP/K8. Induces host chromosome condensation and phosphorylation of histone H3. Phosphorylates the DNA polymerase processivity factor hence modulating its processivity function. Inhibits the host Wnt signaling pathway via direct interactions with beta-catenin/CTNNB1 while the kinase activity of vPK is not required for this inhibitory activity. Also phosphorylates host SAMHD1 and thereby counteracts its antiviral effect by reducing its dNTP hydrolase activity. The polypeptide is Viral protein kinase (vPK) (Human herpesvirus 8 type P (isolate GK18) (HHV-8)).